Consider the following 780-residue polypeptide: Nuclear cap-binding protein subunit 1 (780 aa).

The tract at residues 1 to 25 (MSSYRGSTRPRKRTREGENYGFRPH) is disordered. Residue Ser-29 is modified to Phosphoserine. The MIF4G domain maps to 34–249 (AARIKKDITF…KQLILSREND (216 aa)). Residues 738–780 (ANEPVQENTSEEQEDTKMQPVDAVDEQPSENNQTAADATNEEK) are disordered.

This sequence belongs to the NCBP1 family. Component of the nuclear cap-binding complex (CBC), a heterodimer composed of cbc1 and cbc2 that interacts with capped RNAs.

Its subcellular location is the cytoplasm. It is found in the perinuclear region. The protein localises to the nucleus. Functionally, component of the CBC complex, which binds cotranscriptionally to the 5'-cap of pre-mRNAs and is involved in maturation, export and degradation of nuclear mRNAs. This Schizosaccharomyces pombe (strain 972 / ATCC 24843) (Fission yeast) protein is Nuclear cap-binding protein subunit 1 (cbc1).